The primary structure comprises 195 residues: Glycine-rich protein A3 (195 aa).

Disordered regions lie at residues 23–103 (AGGG…GVAG) and 159–182 (VMES…GSNL). Gly residues predominate over residues 47–77 (PAGGGYPPQGYPPAGGGYPPQGYPPAGGGYP). A compositionally biased stretch (low complexity) spans 82–94 (PPAGHHSGSSAPH). Positions 163–175 (LSRESTGRARSTD) are enriched in basic and acidic residues.

The sequence is that of Glycine-rich protein A3 from Daucus carota (Wild carrot).